The following is a 72-amino-acid chain: UPF0270 protein YheU (72 aa).

This sequence belongs to the UPF0270 family.

This is UPF0270 protein YheU from Shigella flexneri serotype 5b (strain 8401).